Here is a 362-residue protein sequence, read N- to C-terminus: ATP synthase F(1) complex catalytic subunit beta, mitochondrial (362 aa).

K14 bears the N6-acetyllysine; alternate mark. The residue at position 14 (K14) is an N6-succinyllysine; alternate. Residue K51 is modified to N6-acetyllysine. Residues V62, V63, G64, K65, T66, and V67 each contribute to the ADP site. V62 lines the ATP pocket. 5 residues coordinate phosphate: V62, V63, G64, K65, and T66. ATP-binding residues include G64, K65, T66, and V67. Residue T66 participates in Mg(2+) binding. E91 is a binding site for Mg(2+). N6-acetyllysine; alternate is present on residues K112 and K117. Residues K112 and K117 each carry the N6-succinyllysine; alternate modification. A Phosphothreonine modification is found at T165. K279 bears the N6-acetyllysine mark. S286 is modified (phosphoserine). 2 positions are modified to N6-acetyllysine: K333 and K338.

Belongs to the ATPase alpha/beta chains family. Homotrimer. Component of the ATP synthase complex composed at least of ATP5F1A/subunit alpha, ATP5F1B/subunit beta, ATP5MC1/subunit c (homooctomer), MT-ATP6/subunit a, MT-ATP8/subunit 8, ATP5ME/subunit e, ATP5MF/subunit f, ATP5MG/subunit g, ATP5MK/subunit k, ATP5MJ/subunit j, ATP5F1C/subunit gamma, ATP5F1D/subunit delta, ATP5F1E/subunit epsilon, ATP5PF/subunit F6, ATP5PB/subunit b, ATP5PD/subunit d, ATP5PO/subunit OSCP. ATP synthase complex consists of a soluble F(1) head domain (subunits alpha(3) and beta(3)) - the catalytic core - and a membrane F(0) domain - the membrane proton channel (subunits c, a, 8, e, f, g, k and j). These two domains are linked by a central stalk (subunits gamma, delta, and epsilon) rotating inside the F1 region and a stationary peripheral stalk (subunits F6, b, d, and OSCP). Interacts with PPIF. Interacts with BCL2L1 isoform BCL-X(L); the interaction mediates the association of BCL2L1 isoform BCL-X(L) with the mitochondrial membrane F(1)F(0) ATP synthase and enhances neurons metabolic efficiency. Interacts with CLN5 and PPT1. Interacts with S100A1; this interaction increases F1-ATPase activity. Interacts with MTLN. Interacts with TTC5/STRAP; the interaction results in decreased mitochondrial ATP production.

Its subcellular location is the mitochondrion inner membrane. The enzyme catalyses ATP + H2O + 4 H(+)(in) = ADP + phosphate + 5 H(+)(out). Its function is as follows. Catalytic subunit beta, of the mitochondrial membrane ATP synthase complex (F(1)F(0) ATP synthase or Complex V) that produces ATP from ADP in the presence of a proton gradient across the membrane which is generated by electron transport complexes of the respiratory chain. ATP synthase complex consist of a soluble F(1) head domain - the catalytic core - and a membrane F(1) domain - the membrane proton channel. These two domains are linked by a central stalk rotating inside the F(1) region and a stationary peripheral stalk. During catalysis, ATP synthesis in the catalytic domain of F(1) is coupled via a rotary mechanism of the central stalk subunits to proton translocation. In vivo, can only synthesize ATP although its ATP hydrolase activity can be activated artificially in vitro. With the subunit alpha (ATP5F1A), forms the catalytic core in the F(1) domain. This is ATP synthase F(1) complex catalytic subunit beta, mitochondrial from Mesocricetus auratus (Golden hamster).